The sequence spans 1004 residues: 2-oxoglutarate dehydrogenase E1 component (1004 aa).

Belongs to the alpha-ketoglutarate dehydrogenase family. Homodimer. Part of the 2-oxoglutarate dehydrogenase (OGDH) complex composed of E1 (2-oxoglutarate dehydrogenase), E2 (dihydrolipoamide succinyltransferase) and E3 (dihydrolipoamide dehydrogenase); the complex contains multiple copies of the three enzymatic components (E1, E2 and E3). Thiamine diphosphate is required as a cofactor.

It carries out the reaction N(6)-[(R)-lipoyl]-L-lysyl-[protein] + 2-oxoglutarate + H(+) = N(6)-[(R)-S(8)-succinyldihydrolipoyl]-L-lysyl-[protein] + CO2. Functionally, E1 component of the 2-oxoglutarate dehydrogenase (OGDH) complex which catalyzes the decarboxylation of 2-oxoglutarate, the first step in the conversion of 2-oxoglutarate to succinyl-CoA and CO(2). The polypeptide is 2-oxoglutarate dehydrogenase E1 component (Brucella melitensis biotype 2 (strain ATCC 23457)).